Consider the following 488-residue polypeptide: 3-octaprenyl-4-hydroxybenzoate carboxy-lyase (488 aa).

N172 lines the Mn(2+) pocket. Prenylated FMN contacts are provided by residues 175–177 (IYR), 189–191 (RWL), and 194–195 (RG). Mn(2+) is bound at residue E238. D287 serves as the catalytic Proton donor.

It belongs to the UbiD family. Homohexamer. It depends on prenylated FMN as a cofactor. Mn(2+) is required as a cofactor.

Its subcellular location is the cell membrane. The enzyme catalyses a 4-hydroxy-3-(all-trans-polyprenyl)benzoate + H(+) = a 2-(all-trans-polyprenyl)phenol + CO2. Its pathway is cofactor biosynthesis; ubiquinone biosynthesis. Functionally, catalyzes the decarboxylation of 3-octaprenyl-4-hydroxy benzoate to 2-octaprenylphenol, an intermediate step in ubiquinone biosynthesis. In Halorhodospira halophila (strain DSM 244 / SL1) (Ectothiorhodospira halophila (strain DSM 244 / SL1)), this protein is 3-octaprenyl-4-hydroxybenzoate carboxy-lyase.